The sequence spans 386 residues: Na(+)/H(+) antiporter NhaA (386 aa).

The next 11 helical transmembrane spans lie at 11-31 (NDAT…FLAN), 60-80 (LLLW…GLEV), 96-116 (MFPL…YAAF), 126-146 (GWAI…ALLG), 155-175 (MFLM…IALF), 180-200 (LSLI…VLNG), 218-238 (VAVL…GLFI), 260-280 (VSWL…LSGV), 293-313 (ITLG…WLAV), 326-346 (LIDI…SIFI), and 358-378 (LVTL…LVGY).

The protein belongs to the NhaA Na(+)/H(+) (TC 2.A.33) antiporter family.

Its subcellular location is the cell inner membrane. The catalysed reaction is Na(+)(in) + 2 H(+)(out) = Na(+)(out) + 2 H(+)(in). Functionally, na(+)/H(+) antiporter that extrudes sodium in exchange for external protons. This chain is Na(+)/H(+) antiporter NhaA, found in Erwinia tasmaniensis (strain DSM 17950 / CFBP 7177 / CIP 109463 / NCPPB 4357 / Et1/99).